Reading from the N-terminus, the 419-residue chain is UDP-N-acetylglucosamine 1-carboxyvinyltransferase (419 aa).

Residue 22-23 (KN) participates in phosphoenolpyruvate binding. Residue Arg92 coordinates UDP-N-acetyl-alpha-D-glucosamine. Cys116 (proton donor) is an active-site residue. Residue Cys116 is modified to 2-(S-cysteinyl)pyruvic acid O-phosphothioketal. UDP-N-acetyl-alpha-D-glucosamine-binding positions include 121 to 125 (RPIDL), Asp306, and Ile328.

It belongs to the EPSP synthase family. MurA subfamily.

The protein localises to the cytoplasm. It carries out the reaction phosphoenolpyruvate + UDP-N-acetyl-alpha-D-glucosamine = UDP-N-acetyl-3-O-(1-carboxyvinyl)-alpha-D-glucosamine + phosphate. Its pathway is cell wall biogenesis; peptidoglycan biosynthesis. Its function is as follows. Cell wall formation. Adds enolpyruvyl to UDP-N-acetylglucosamine. Target for the antibiotic fosfomycin. The chain is UDP-N-acetylglucosamine 1-carboxyvinyltransferase from Streptococcus pneumoniae (strain Hungary19A-6).